Here is a 691-residue protein sequence, read N- to C-terminus: 1,4-alpha-glucan-branching enzyme (691 aa).

Residues Trp-80 and Lys-116 each contribute to the (1,4-alpha-D-glucosyl)n site. Asp-333 acts as the Nucleophile in catalysis. Glu-398 (proton donor) is an active-site residue.

Belongs to the glycosyl hydrolase 13 family. GlgB subfamily.

The protein resides in the cytoplasm. It carries out the reaction Transfers a segment of a (1-&gt;4)-alpha-D-glucan chain to a primary hydroxy group in a similar glucan chain.. It functions in the pathway glycan biosynthesis; glycogen biosynthesis. Glycogen-branching enzyme participates in the glycogen biosynthetic process along with glycogenin and glycogen synthase. Generates alpha-1,6-glucosidic branches from alpha-1,4-linked glucose chains, to increase solubility of the glycogen polymer. In Yarrowia lipolytica (strain CLIB 122 / E 150) (Yeast), this protein is 1,4-alpha-glucan-branching enzyme (GLC3).